The chain runs to 310 residues: Aspartate carbamoyltransferase catalytic subunit 3 (310 aa).

Carbamoyl phosphate is bound by residues Arg55 and Thr56. Lys85 lines the L-aspartate pocket. Arg106, His134, and Gln137 together coordinate carbamoyl phosphate. 2 residues coordinate L-aspartate: Arg167 and Arg228. Carbamoyl phosphate is bound by residues Leu266 and Pro267.

This sequence belongs to the aspartate/ornithine carbamoyltransferase superfamily. ATCase family. In terms of assembly, heterododecamer (2C3:3R2) of six catalytic PyrB chains organized as two trimers (C3), and six regulatory PyrI chains organized as three dimers (R2).

The catalysed reaction is carbamoyl phosphate + L-aspartate = N-carbamoyl-L-aspartate + phosphate + H(+). The protein operates within pyrimidine metabolism; UMP biosynthesis via de novo pathway; (S)-dihydroorotate from bicarbonate: step 2/3. Catalyzes the condensation of carbamoyl phosphate and aspartate to form carbamoyl aspartate and inorganic phosphate, the committed step in the de novo pyrimidine nucleotide biosynthesis pathway. This Shewanella halifaxensis (strain HAW-EB4) protein is Aspartate carbamoyltransferase catalytic subunit 3.